The following is a 653-amino-acid chain: MGRRRAPAGGSLGRALMRHQTQRSRSHRHTDSWLHTSELNDGYDWGRLNLQSVTEESSLDDFLATAELAGTEFVAEKLNIKFVPAEARTGLLSFEESQRIKKLHEENKQFLCIPRRPNWNKNTTPEELKQAEKDNFLEWRRQLVRLEEEQKLILTSFERNLDFWRQLWRVIERSDIVVQIVDARNPLLFRCEDLECYVKEIDASKENVILINKADLLTAEQRSAWATYFEKEDVKVIFWSALAGAIHLNGDSEEEANKDDRQSNTAEFEHSSFDEAEISHSETEHLPARDSPSLSENLTTDEDDSEYEDCPEEEEDDWQTCSEEDGPEEEDCGQDWKESSAADSEAQSRKTPQKRQLHNFSHLVSKQELLELFKELHTGRKVKDGQLTIGTGWGYPNVGKSSTINTIMGNKKVSVSATPGHTKHFQTLYVEPGLCLCDCPGLVMPSFVSTKAEMTCSGILPIDQMRDHVPPVSLVCQNIPRHVLEATYGINIIKPREDEDPHRPPTSEELLTAYGYMRGFMTAHGQPDQPRSARYILKDYVNGKLLYCHPPPGRDPVTFQHQHQRLPENKTNGDEIKMRPGRNKKVKQIENIVDKTFFHQENVRALTKGVQAVMGYKPGSGVVTAATVSSENGAGKPWKKHGNRNKKEKSCRL.

Residues 1 to 31 (MGRRRAPAGGSLGRALMRHQTQRSRSHRHTD) form a disordered region. The span at 16–28 (LMRHQTQRSRSHR) shows a compositional bias: basic residues. Residues Ser-93 and Ser-97 each carry the phosphoserine modification. The 282-residue stretch at 164 to 445 (WRQLWRVIER…LCDCPGLVMP (282 aa)) folds into the CP-type G domain. Residue 212-215 (NKAD) coordinates GTP. The interval 251 to 358 (DSEEEANKDD…RKTPQKRQLH (108 aa)) is disordered. Position 252 is a phosphoserine (Ser-252). Positions 258-288 (KDDRQSNTAEFEHSSFDEAEISHSETEHLPA) are enriched in basic and acidic residues. Acidic residues predominate over residues 299–333 (TTDEDDSEYEDCPEEEEDDWQTCSEEDGPEEEDCG). GTP-binding positions include 394 to 401 (GYPNVGKS) and 438 to 441 (DCPG). The disordered stretch occupies residues 630–653 (SENGAGKPWKKHGNRNKKEKSCRL). Positions 637-647 (PWKKHGNRNKK) are enriched in basic residues.

The protein belongs to the TRAFAC class YlqF/YawG GTPase family. LSG1 subfamily.

Its subcellular location is the cytoplasm. It localises to the endoplasmic reticulum. The protein localises to the nucleus. The protein resides in the cajal body. The catalysed reaction is GTP + H2O = GDP + phosphate + H(+). Functionally, functions as a GTPase. May act by mediating the release of NMD3 from the 60S ribosomal subunit after export into the cytoplasm during the 60S ribosomal subunit maturation. The protein is Large subunit GTPase 1 homolog of Macaca fascicularis (Crab-eating macaque).